A 114-amino-acid polypeptide reads, in one-letter code: UPF0342 protein LVIS_1488 (114 aa).

Belongs to the UPF0342 family.

The chain is UPF0342 protein LVIS_1488 from Levilactobacillus brevis (strain ATCC 367 / BCRC 12310 / CIP 105137 / JCM 1170 / LMG 11437 / NCIMB 947 / NCTC 947) (Lactobacillus brevis).